The chain runs to 224 residues: GTP-binding protein RHO3 (224 aa).

22 to 29 serves as a coordination point for GTP; that stretch reads GDGACGKT. The Effector region motif lies at 44–52; sequence YEPTVFENY. Residues 69 to 73 and 127 to 130 each bind GTP; these read DTAGQ and LKCD. The tract at residues 205–224 is disordered; sequence TPKGARDSAPEAESSSCTIM. Position 221 is a cysteine methyl ester (Cys221). A lipid anchor (S-geranylgeranyl cysteine) is attached at Cys221. Positions 222-224 are cleaved as a propeptide — removed in mature form; that stretch reads TIM.

This sequence belongs to the small GTPase superfamily. Rho family.

The protein resides in the cell membrane. Involved in the regulation of actin polarization. Rho proteins are required for distinct steps during polarized hyphal growth of A.gossypii. This is GTP-binding protein RHO3 (RHO3) from Eremothecium gossypii (strain ATCC 10895 / CBS 109.51 / FGSC 9923 / NRRL Y-1056) (Yeast).